Consider the following 382-residue polypeptide: uncharacterized protein (382 aa).

12 helical membrane-spanning segments follow: residues V8–L28, W41–A61, S73–D93, F94–I114, A133–V153, L157–F177, G208–S228, A235–I255, V274–I294, L295–S315, A325–M345, and S349–L369.

It belongs to the major facilitator superfamily. YcaD (TC 2.A.1.26) family.

It is found in the cell inner membrane. This is an uncharacterized protein from Yersinia enterocolitica serotype O:8 / biotype 1B (strain NCTC 13174 / 8081).